A 246-amino-acid polypeptide reads, in one-letter code: 5'-nucleotidase SurE (246 aa).

Residues D8, D9, S39, and N91 each coordinate a divalent metal cation.

It belongs to the SurE nucleotidase family. A divalent metal cation serves as cofactor.

It localises to the cytoplasm. It catalyses the reaction a ribonucleoside 5'-phosphate + H2O = a ribonucleoside + phosphate. In terms of biological role, nucleotidase that shows phosphatase activity on nucleoside 5'-monophosphates. The polypeptide is 5'-nucleotidase SurE (Histophilus somni (strain 129Pt) (Haemophilus somnus)).